A 303-amino-acid polypeptide reads, in one-letter code: Acetyltransferase ataH (303 aa).

Residues 1-23 form the signal peptide; sequence MPTTAAFLRALYILTTLRGIGTS. The next 3 membrane-spanning stretches (helical) occupy residues 42–62, 194–214, and 257–277; these read FLLH…MMTF, LVFA…GIML, and GYIW…FPLF.

The protein belongs to the wax synthase family.

It localises to the membrane. Its pathway is mycotoxin biosynthesis. Functionally, acetyltransferase; part of the gene cluster that mediates the biosynthesis of acetylaranotin, a member of the epipolythiodioxopiperazine (ETP) class of toxins characterized by a disulfide-bridged cyclic dipeptide. The first step of acetylaranotin biosynthesis is performed by the NRPS ataP which produces diketopiperazine cyclo-L-Phe-L-Phe via the condensation of 2 phenylalanines (L-Phe). The ataC domain of ataTC then catalyzes the formation of bishydroxylation of cyclo-L-Phe-L-Phe. The glutathione S-transferase domain ataG in ataIMG further catalyzes the conjugation of two glutathiones to the bishydroxylated intermediate. Next, the dipeptidase ataJ removes the Glu residues. The following step is performed by the carbon sulfur lyase domain ataI of ataIMG which may convert the bis-cysteinyl adduct to yield an epidithiol intermediate. The ataT domain from ataTC then catalyzes the oxidation of the free dithiols, followed by a cyclization step catalyzed by the cytochrome P450 ataF. AtaF probably acts as an epoxidase to promote a dual epoxidation formation at C8 and C9 along with C8' and C9', followed by the spontaneous nucleophilic attack of the amide nitrogens N10 and N10' to yield an intermediate with the pyrrolidine partial structure. The final steps of acetylaranotin biosynthesis involve the acetylation and ring rearrangement of an epitetrathiodiketopiperazine intermediate to produce acetylaranotin. AtaH probably catalyzes the acetylation of epitetrathiodiketopiperazine to produce a diacetate and ataY is responsible for the formation of the dihydrooxepin moiety that converts the diacetate intermediate to acetylaranotin via acetylapoaranotin. Both enzymes could function independently in the absence of the other. The acetylaranotin bis-thiomethyltransferase ataS located outside of acetylaranotin gene cluster is the main thiomethyltransferase responsible for converting acetylaranotin and its related intermediates to their methylated forms. The sequence is that of Acetyltransferase ataH from Aspergillus terreus (strain NIH 2624 / FGSC A1156).